Consider the following 818-residue polypeptide: Protocadherin beta-1 (818 aa).

Residues 1–28 (MAGTRRKSLQNRQVGSLLIFLCISVGDA) form the signal peptide. Over 29-691 (TTIRYSVAEE…RKVNPSTKYL (663 aa)) the chain is Extracellular. Cadherin domains are found at residues 35 to 133 (VAEE…APVF), 138 to 242 (PLLK…VPQF), 243 to 347 (SRLV…PPEV), 348 to 452 (MVSS…PPIF), and 457 to 562 (YILT…RPMI). 4 N-linked (GlcNAc...) asparagine glycosylation sites follow: Asn-169, Asn-209, Asn-257, and Asn-419. N-linked (GlcNAc...) asparagine glycosylation is present at Asn-568. Positions 577–672 (VPRSAEAGYL…LVDGFSEPYL (96 aa)) constitute a Cadherin 6 domain. A helical transmembrane segment spans residues 692 to 712 (VISLVILSFLFLLSVIVIFII). The Cytoplasmic segment spans residues 713 to 818 (HVYQKIKYRE…GHDQVSDDYM (106 aa)). The segment at 789-818 (MEAGSSLPPNSDRNKSQRLEGHDQVSDDYM) is disordered. Residues 800 to 818 (DRNKSQRLEGHDQVSDDYM) show a composition bias toward basic and acidic residues.

It is found in the cell membrane. Functionally, potential calcium-dependent cell-adhesion protein. May be involved in the establishment and maintenance of specific neuronal connections in the brain. This is Protocadherin beta-1 (PCDHB1) from Homo sapiens (Human).